A 335-amino-acid chain; its full sequence is 3-hydroxy-3-methylglutaryl-CoA lyase, cytoplasmic (335 aa).

Gly-2 carries the N-myristoyl glycine lipid modification. One can recognise a Pyruvate carboxyltransferase domain in the interval 43-310; sequence VKIVEVGPRD…ETGVDLLKVM (268 aa). Residue Arg-51 coordinates substrate. Asp-52 serves as a coordination point for a divalent metal cation. The residue at position 58 (Lys-58) is an N6-acetyllysine. Positions 243 and 245 each coordinate a divalent metal cation. Cys-276 is a catalytic residue. Asn-285 is a binding site for a divalent metal cation.

The protein belongs to the HMG-CoA lyase family. Requires a divalent metal cation as cofactor.

It localises to the cytoplasm. Its subcellular location is the cytosol. It is found in the endoplasmic reticulum membrane. The catalysed reaction is (3S)-3-hydroxy-3-methylglutaryl-CoA = acetoacetate + acetyl-CoA. It participates in metabolic intermediate metabolism; (S)-3-hydroxy-3-methylglutaryl-CoA degradation; acetoacetate from (S)-3-hydroxy-3-methylglutaryl-CoA: step 1/1. Its function is as follows. Non-mitochondrial 3-hydroxy-3-methylglutaryl-CoA lyase that catalyzes a cation-dependent cleavage of (S)-3-hydroxy-3-methylglutaryl-CoA into acetyl-CoA and acetoacetate, a key step in ketogenesis, the products of which support energy production in nonhepatic animal tissues. In Danio rerio (Zebrafish), this protein is 3-hydroxy-3-methylglutaryl-CoA lyase, cytoplasmic (hmgcll1).